The following is a 351-amino-acid chain: MTTLTSPSTTPLTYRDAGVDIDAGNTLVERIKPLVKRSFRPEVMSGLGGFGALFNLAGKYKEPVLVSGTDGVGTKLKLAQQLNRHNTIGIDLVAMCVNDVLVQGAEPLFFLDYFATGKLDIDTATAVISGIALGCEQSGCALIGGETAEMPDMYPPGEYDLAGFCVAAVEKSQLLDGSQVREGDVLIGIASSGPHSNGYSLIRRIYERAGSPADLDIHGTRLIDTLMAPTTLYVKPILKLLHTHSDAIHAMAHITGGGLTENIIRVIPPNLGLRIDANAWTQPPVFQWLQSEGALADTEMWRTFNCGIGFVLVATPNQVAPLGQALDNQGLAHWQIGRVFTPVGNERVHIG.

Belongs to the AIR synthase family.

The protein resides in the cytoplasm. The catalysed reaction is 2-formamido-N(1)-(5-O-phospho-beta-D-ribosyl)acetamidine + ATP = 5-amino-1-(5-phospho-beta-D-ribosyl)imidazole + ADP + phosphate + H(+). The protein operates within purine metabolism; IMP biosynthesis via de novo pathway; 5-amino-1-(5-phospho-D-ribosyl)imidazole from N(2)-formyl-N(1)-(5-phospho-D-ribosyl)glycinamide: step 2/2. The protein is Phosphoribosylformylglycinamidine cyclo-ligase of Xylella fastidiosa (strain 9a5c).